We begin with the raw amino-acid sequence, 100 residues long: Large ribosomal subunit protein uL23 (100 aa).

It belongs to the universal ribosomal protein uL23 family. As to quaternary structure, part of the 50S ribosomal subunit. Contacts protein L29, and trigger factor when it is bound to the ribosome.

Functionally, one of the early assembly proteins it binds 23S rRNA. One of the proteins that surrounds the polypeptide exit tunnel on the outside of the ribosome. Forms the main docking site for trigger factor binding to the ribosome. The polypeptide is Large ribosomal subunit protein uL23 (Synechococcus elongatus (strain ATCC 33912 / PCC 7942 / FACHB-805) (Anacystis nidulans R2)).